Here is a 427-residue protein sequence, read N- to C-terminus: Terminal nucleotidyltransferase 5B (427 aa).

The span at 1-11 (MMPSESGDESL) shows a compositional bias: acidic residues. A disordered region spans residues 1-46 (MMPSESGDESLEQPAAQVGTGAASAVATAGAAGGGPDLEASSASLG). Over residues 15–30 (AAQVGTGAASAVATAG) the composition is skewed to low complexity.

It belongs to the TENT family.

The protein resides in the cytoplasm. The protein localises to the nucleus. It carries out the reaction RNA(n) + ATP = RNA(n)-3'-adenine ribonucleotide + diphosphate. Catalyzes the transfer of one adenosine molecule from an ATP to an mRNA poly(A) tail bearing a 3'-OH terminal group in an ATP hydrolysis-dependent manner. May be involved in maintaining the translation efficiency of at least some genes through preventing degradation of their mRNAs. Prefers RNA molecules that are adenosine-rich close to 3'-end. In addition, may inhibit cell proliferation and cell cycle progression through ubiquitination of beta-catenin/CTNNB1. This is Terminal nucleotidyltransferase 5B from Rattus norvegicus (Rat).